A 303-amino-acid polypeptide reads, in one-letter code: 5-dehydro-4-deoxyglucarate dehydratase (303 aa).

The protein belongs to the DapA family.

The enzyme catalyses 5-dehydro-4-deoxy-D-glucarate + H(+) = 2,5-dioxopentanoate + CO2 + H2O. Its pathway is carbohydrate acid metabolism; D-glucarate degradation; 2,5-dioxopentanoate from D-glucarate: step 2/2. In Pseudomonas putida (Arthrobacter siderocapsulatus), this protein is 5-dehydro-4-deoxyglucarate dehydratase.